A 286-amino-acid polypeptide reads, in one-letter code: MIKPVQTELYAVIGNPVAHSLSPVMMNAAFRSMNVPATYLALQADELPEDLETLARFGFRGLSVTLPHKELAYRLADHVDDMARTIGAVNTLMREGSAWIGCNTDWLGATKALRRVTELEGREALILGAGGAARAVAFGMKREGARVTIANRCVEKGKALAKSFRCDFIPLAILDRARFDRHFDVVVQCTSVGLQGTIPTVLVSDSFFEPGMVVMETVYRPLRTPFLNAAKRAGATIVHGTDMLVYQGVAQLEWWLSRPIPEFPCVAAMKQAIHEVLSKEKNAQDD.

Residues 20–22 (SLS) and T65 contribute to the shikimate site. K69 (proton acceptor) is an active-site residue. D81 contacts NADP(+). Residues N90 and D105 each coordinate shikimate. Residues 128-132 (GAGGA) and T217 contribute to the NADP(+) site. Y219 lines the shikimate pocket. G240 provides a ligand contact to NADP(+).

Belongs to the shikimate dehydrogenase family. Homodimer.

It catalyses the reaction shikimate + NADP(+) = 3-dehydroshikimate + NADPH + H(+). The protein operates within metabolic intermediate biosynthesis; chorismate biosynthesis; chorismate from D-erythrose 4-phosphate and phosphoenolpyruvate: step 4/7. In terms of biological role, involved in the biosynthesis of the chorismate, which leads to the biosynthesis of aromatic amino acids. Catalyzes the reversible NADPH linked reduction of 3-dehydroshikimate (DHSA) to yield shikimate (SA). The polypeptide is Shikimate dehydrogenase (NADP(+)) (Syntrophobacter fumaroxidans (strain DSM 10017 / MPOB)).